The chain runs to 1093 residues: Probable cellulose synthase A catalytic subunit 3 [UDP-forming] (1093 aa).

Over 1–280 the chain is Cytoplasmic; it reads MEASAGLVAG…PSSQINPYRM (280 aa). Zn(2+) contacts are provided by Cys39, Cys42, Cys58, Cys61, Cys66, Cys69, Cys81, and Cys84. The RING-type; degenerate zinc-finger motif lies at 39 to 85; sequence CQICGDDVGLNPDGEPFVACNECAFPVCRDCYEYERREGTQNCPQCK. Residues 233-246 are compositionally biased toward basic and acidic residues; it reads LHQMRNDGGGKDWD. The segment at 233–257 is disordered; the sequence is LHQMRNDGGGKDWDGDGDDGDLPLM. The helical transmembrane segment at 281-301 threads the bilayer; sequence VIIIRLVVLGFFFHYRVMHPV. Residues 302–303 lie on the Extracellular side of the membrane; that stretch reads PD. The helical transmembrane segment at 304-324 threads the bilayer; that stretch reads AFALWLISVICEIWFAMSWIL. Topologically, residues 325–869 are cytoplasmic; sequence DQFPKWFPIE…CLERFSYINS (545 aa). Residues Ser363, Lys369, Glu370, and Asp399 each contribute to the UDP-alpha-D-glucose site. Asp399 is an active-site residue. Residues 453–480 are a coiled coil; the sequence is VRERRAMKREYEEFKVRINALVAKAQKV. Lys540 provides a ligand contact to UDP-alpha-D-glucose. The Mn(2+) site is built by Lys541 and Asp565. Asp793 is an active-site residue. The helical transmembrane segment at 870-890 threads the bilayer; that stretch reads IVYPFTSIPLLAYCTLPAICL. Residues 891–902 are Extracellular-facing; sequence LTGKFITPELTN. A helical transmembrane segment spans residues 903-923; the sequence is VASLWFMSLFICIFATGILEM. The Cytoplasmic portion of the chain corresponds to 924–939; the sequence is RWSGVGIDDWWRNEQF. A helical transmembrane segment spans residues 940 to 960; sequence WVIGGVSSHLFALFQGLLKVI. Over 961-988 the chain is Extracellular; it reads AGIDTSFTVTSKGGDDEEFSELYTFKWT. The helical transmembrane segment at 989-1009 threads the bilayer; that stretch reads TLLIPPTTLLLLNFIGVVAGV. Residues 1010-1020 lie on the Cytoplasmic side of the membrane; it reads SNAINNGYESW. The helical transmembrane segment at 1021 to 1041 threads the bilayer; that stretch reads GPLFGKLFFAFWVIVHLYPFL. At 1042 to 1050 the chain is on the extracellular side; the sequence is KGLVGRQNR. The chain crosses the membrane as a helical span at residues 1051–1071; it reads TPTIVIVWSILLASIFSLLWV. Residues 1072-1093 lie on the Cytoplasmic side of the membrane; that stretch reads RIDPFLAKNDGPLLEECGLDCN.

It belongs to the glycosyltransferase 2 family. Plant cellulose synthase subfamily. The cofactor is Mn(2+). It depends on Zn(2+) as a cofactor.

The protein localises to the cell membrane. The catalysed reaction is [(1-&gt;4)-beta-D-glucosyl](n) + UDP-alpha-D-glucose = [(1-&gt;4)-beta-D-glucosyl](n+1) + UDP + H(+). It functions in the pathway glycan metabolism; plant cellulose biosynthesis. Probable catalytic subunit of cellulose synthase terminal complexes ('rosettes'), required for beta-1,4-glucan microfibril crystallization, a major mechanism of the cell wall formation. The sequence is that of Probable cellulose synthase A catalytic subunit 3 [UDP-forming] (CESA3) from Oryza sativa subsp. japonica (Rice).